The primary structure comprises 1596 residues: Cellulose synthase 2 (1596 aa).

Positions 1–749 are catalytic; the sequence is MIYRAILKRL…RSARHGATAS (749 aa). Transmembrane regions (helical) follow at residues 25–45 and 106–126; these read SPFV…GVTI and LSLL…LSYF. Residues 145-238 are catalytic subdomain A; it reads DWPVVDVYVP…YVVIFDCDHI (94 aa). Asp-187 is an active-site residue. Substrate contacts are provided by Asp-234 and Asp-236. Positions 315–375 are catalytic subdomain B; it reads SAVLGIGGFA…GQRVRWARGM (61 aa). The active site involves Asp-331. A run of 4 helical transmembrane segments spans residues 396-416, 421-441, 505-525, and 544-564; these read LCYL…VFLA, FLFL…VYAF, FDLN…LALV, and FALN…SIAV. A PilZ domain is found at 570-669; it reads QIRHKPRVRA…ERQIVEFMFG (100 aa). The segment at 750–1596 is cyclic di-GMP binding domain; sequence LIVLLGLPAA…RVKDTTDASH (847 aa). 2 disordered regions span residues 769–812 and 828–868; these read SRAT…IAPA and TGPA…APPI. Pro residues predominate over residues 783 to 809; sequence VEPPPVNAPPPPSLPQPPGTLPTPPQI. Residues 1553-1573 traverse the membrane as a helical segment; it reads LTLYVLGLVGAGLVAAAAVRL.

It in the N-terminal section; belongs to the glycosyltransferase 2 family. This sequence in the C-terminal section; belongs to the AcsB/BcsB family.

Its subcellular location is the cell inner membrane. It catalyses the reaction [(1-&gt;4)-beta-D-glucosyl](n) + UDP-alpha-D-glucose = [(1-&gt;4)-beta-D-glucosyl](n+1) + UDP + H(+). The polypeptide is Cellulose synthase 2 (acsAII) (Novacetimonas hansenii (Komagataeibacter hansenii)).